Reading from the N-terminus, the 386-residue chain is 26S proteasome non-ATPase regulatory subunit 13 homolog A (386 aa).

Residue alanine 2 is modified to N-acetylalanine. One can recognise a PCI domain in the interval 173 to 347 (EFSDFYKSAL…GTIYVSWAQP (175 aa)).

The protein belongs to the proteasome subunit S11 family. As to quaternary structure, component of the 19S regulatory particle (RP/PA700) lid subcomplex of the 26S proteasome. The 26S proteasome is composed of a core protease (CP), known as the 20S proteasome, capped at one or both ends by the 19S regulatory particle (RP/PA700). The RP/PA700 complex is composed of at least 17 different subunits in two subcomplexes, the base and the lid, which form the portions proximal and distal to the 20S proteolytic core, respectively. Ubiquitous with highest expression in flowers.

Acts as a regulatory subunit of the 26S proteasome which is involved in the ATP-dependent degradation of ubiquitinated proteins. This chain is 26S proteasome non-ATPase regulatory subunit 13 homolog A (RPN9A), found in Arabidopsis thaliana (Mouse-ear cress).